The chain runs to 88 residues: Large ribosomal subunit protein bL27 (88 aa).

The tract at residues 1-21 (MAHKKGASSSRNGRDSNAQRL) is disordered. Residues 7-19 (ASSSRNGRDSNAQ) show a composition bias toward polar residues.

It belongs to the bacterial ribosomal protein bL27 family.

The polypeptide is Large ribosomal subunit protein bL27 (Frankia casuarinae (strain DSM 45818 / CECT 9043 / HFP020203 / CcI3)).